Here is a 1108-residue protein sequence, read N- to C-terminus: Valine--tRNA ligase, mitochondrial 1 (1108 aa).

The N-terminal 46 residues, 1-46 (MSLLFLRRAKPLFVSCCSATHSRSSFLSPTLTNQLVRSFHGSRTMS), are a transit peptide targeting the mitochondrion. The span at 57 to 93 (ELERKKKKEEKAKEKELKKQKALEKERLAELKAKQAK) shows a compositional bias: basic and acidic residues. Positions 57–138 (ELERKKKKEE…RKRLSSQMAK (82 aa)) are disordered. The 'HIGH' region signature appears at 177–187 (PNVTGALHIGH). Positions 695 to 699 (KMSKS) match the 'KMSKS' region motif. Residue Lys-698 participates in ATP binding. Residues 1032–1064 (AINTEAEQEKIRNKIGELQKQKEKLQKMMSVST) are a coiled coil.

This sequence belongs to the class-I aminoacyl-tRNA synthetase family.

The protein localises to the mitochondrion. Its subcellular location is the cytoplasm. The protein resides in the cytosol. The catalysed reaction is tRNA(Val) + L-valine + ATP = L-valyl-tRNA(Val) + AMP + diphosphate. Functionally, required for embryo development and seed viability. This Arabidopsis thaliana (Mouse-ear cress) protein is Valine--tRNA ligase, mitochondrial 1.